Reading from the N-terminus, the 103-residue chain is MNEGNRQKAMNLIGLAMRAGKLITGEELTIADIRNEKAKIVFVANDASENTKKKVKDKSSYYEVPCFELFSEAEITQMIGKPRKVFGIVDNGFAKKTKELIEG.

It belongs to the eukaryotic ribosomal protein eL8 family.

In terms of biological role, RNA-binding protein that recognizes the K-turn motif present in ribosomal RNA, but also in box C/D and box C'/D' sRNAs. In Enterococcus faecium (Streptococcus faecium), this protein is RNA-binding protein YlxQ.